The following is a 172-amino-acid chain: CD164 sialomucin-like 2 protein (172 aa).

The N-terminal stretch at 1–29 is a signal peptide; the sequence is MAAPGPRALRAALCGGCCCLLLCAQLVLA. Residues 30 to 137 lie on the Extracellular side of the membrane; that stretch reads GKGARGFGRG…PEDHSPGFDG (108 aa). Asn-69 and Asn-101 each carry an N-linked (GlcNAc...) asparagine glycan. The interval 108–132 is disordered; it reads ASHHHSTEEPKPSTTGSPPIPEDHS. The chain crosses the membrane as a helical span at residues 138-158; sequence ASFIGGIVLVLSLQATAFFVL. The Cytoplasmic segment spans residues 159-172; the sequence is RFLKAKDSTYQTLI.

The protein belongs to the CD164 family.

Its subcellular location is the membrane. The polypeptide is CD164 sialomucin-like 2 protein (Cd164l2) (Mus musculus (Mouse)).